The primary structure comprises 325 residues: Formimidoylglutamase (325 aa).

Positions 125, 155, 157, 159, 246, and 248 each coordinate Mn(2+).

Belongs to the arginase family. Mn(2+) serves as cofactor.

The catalysed reaction is N-formimidoyl-L-glutamate + H2O = formamide + L-glutamate. The protein operates within amino-acid degradation; L-histidine degradation into L-glutamate; L-glutamate from N-formimidoyl-L-glutamate (hydrolase route): step 1/1. Functionally, catalyzes the conversion of N-formimidoyl-L-glutamate to L-glutamate and formamide. The chain is Formimidoylglutamase from Ralstonia nicotianae (strain ATCC BAA-1114 / GMI1000) (Ralstonia solanacearum).